A 175-amino-acid polypeptide reads, in one-letter code: Large ribosomal subunit protein uL6 (175 aa).

Belongs to the universal ribosomal protein uL6 family. Part of the 50S ribosomal subunit.

Functionally, this protein binds to the 23S rRNA, and is important in its secondary structure. It is located near the subunit interface in the base of the L7/L12 stalk, and near the tRNA binding site of the peptidyltransferase center. The polypeptide is Large ribosomal subunit protein uL6 (Xylella fastidiosa (strain M23)).